The following is a 417-amino-acid chain: Multifunctional CCA protein (417 aa).

ATP-binding residues include G8 and R11. 2 residues coordinate CTP: G8 and R11. Mg(2+) contacts are provided by D21 and D23. The ATP site is built by R91, R137, and R140. CTP contacts are provided by R91, R137, and R140. Residues 225-326 (SGIHTLMTLQ…LNVLKKTDAF (102 aa)) enclose the HD domain.

Belongs to the tRNA nucleotidyltransferase/poly(A) polymerase family. Bacterial CCA-adding enzyme type 1 subfamily. Monomer. Can also form homodimers and oligomers. Mg(2+) serves as cofactor. Requires Ni(2+) as cofactor.

It catalyses the reaction a tRNA precursor + 2 CTP + ATP = a tRNA with a 3' CCA end + 3 diphosphate. The catalysed reaction is a tRNA with a 3' CCA end + 2 CTP + ATP = a tRNA with a 3' CCACCA end + 3 diphosphate. In terms of biological role, catalyzes the addition and repair of the essential 3'-terminal CCA sequence in tRNAs without using a nucleic acid template. Adds these three nucleotides in the order of C, C, and A to the tRNA nucleotide-73, using CTP and ATP as substrates and producing inorganic pyrophosphate. tRNA 3'-terminal CCA addition is required both for tRNA processing and repair. Also involved in tRNA surveillance by mediating tandem CCA addition to generate a CCACCA at the 3' terminus of unstable tRNAs. While stable tRNAs receive only 3'-terminal CCA, unstable tRNAs are marked with CCACCA and rapidly degraded. The protein is Multifunctional CCA protein of Neisseria meningitidis serogroup A / serotype 4A (strain DSM 15465 / Z2491).